Here is a 314-residue protein sequence, read N- to C-terminus: MESLLHASSSLVSLRPRIDGRDSFINPSRVCLNPSLGRRGSKPLPLVAAAKKKKSKKDDNHNFSARPDEATGPFPESILLKEKKIDEEGDLLPEFADAEEKELYQFLDLQLQSDLNEERMRHYEVVYLIHEKHAEEVESINQKVQDYLKEKKGKVWRFSDWGMRRLAYKIQKAENAHYILMNFEIEAKYLNEFKGLLDSDERVIRHLVMKRDEAITEDCPPPPEFHSVRAGDEYYDDDEEEEIEEDEDEGEGEDEEDADNIEYEVDDDGNVVMVLYGDEEEGEEEEDGASEQEEGQDKSTNGRRETRRTVNVGG.

A chloroplast-targeting transit peptide spans 1–47 (MESLLHASSSLVSLRPRIDGRDSFINPSRVCLNPSLGRRGSKPLPLV). Disordered stretches follow at residues 49 to 73 (AAKK…ATGP) and 214 to 314 (AITE…NVGG). The segment covering 56-69 (KKDDNHNFSARPDE) has biased composition (basic and acidic residues). Acidic residues-rich tracts occupy residues 233 to 269 (EYYD…DDDG) and 277 to 294 (GDEE…EQEE). A compositionally biased stretch (basic and acidic residues) spans 295 to 308 (GQDKSTNGRRETRR).

It belongs to the bacterial ribosomal protein bS6 family. Interacts with CFM3B/SPRT2 in plastids. In terms of tissue distribution, expressed ubiquitously in roots, leaves, stems, flower buds, flowers and siliques.

It is found in the plastid. The protein localises to the chloroplast. Its function is as follows. Prevents non-specific action of the splicing factor CFM3b during plastid rRNA biogenesis to improve the accuracy of plastid rRNA processing. Required for plastid functions such as photosynthesis, intracellular distribution, plastid rRNAs biosynthesis and plastid gene expression in roots. Involved in a sucrose-conditional process important for the organization of root lateral and apical meristems (e.g. establishment of RAM from pericycle and symplasmic connectivity), and subsequent primary and lateral roots development. Modulates C18 unsaturated fatty acid metabolism. The protein is Protein REGULATOR OF FATTY ACID COMPOSITION 3, chloroplastic of Arabidopsis thaliana (Mouse-ear cress).